The chain runs to 290 residues: Syntaxin-2 (290 aa).

The Cytoplasmic portion of the chain corresponds to 1-266; sequence MRDRLPDLTA…KYQSKARRKK (266 aa). S14 is modified (phosphoserine). The stretch at 69-106 forms a coiled coil; the sequence is EGKIKEELEDLNKEIKKTANRIRGKLKAIEQSCDQDEN. The t-SNARE coiled-coil homology domain occupies 193–255; the sequence is LNEIESRHKD…EHAKEETKKA (63 aa). Residues 267-290 traverse the membrane as a helical; Anchor for type IV membrane protein segment; that stretch reads WIIAAVVVAVIAVLALIIGLTVGK.

It belongs to the syntaxin family. As to quaternary structure, interacts with SYT6 and SYT8; the interaction is Ca(2+)-dependent. In terms of tissue distribution, heart, spleen, liver, and testis.

Its subcellular location is the membrane. Its function is as follows. Essential for epithelial morphogenesis. May mediate Ca(2+)-regulation of exocytosis acrosomal reaction in sperm. The sequence is that of Syntaxin-2 (Stx2) from Rattus norvegicus (Rat).